We begin with the raw amino-acid sequence, 849 residues long: Serine/threonine-protein phosphatase 4 regulatory subunit 3B (849 aa).

Residues 1 to 100 (MSDTRRRVKV…DEIWEKICQV (100 aa)) form the WH1 domain. Ser-117 and Ser-695 each carry phosphoserine. Residues 714–724 (EMWFNEDEEEE) show a composition bias toward acidic residues. Positions 714–849 (EMWFNEDEEE…SPRKRPRLGS (136 aa)) are disordered. A compositionally biased stretch (basic and acidic residues) spans 733–764 (EKPKPEDDFPDNYEKFMETKKAKESEDKENLP). Residues 776-818 (FSHSASAANGTNSKSVVAQIPPATSNGSSSKTTNLPTSVTATK) show a composition bias toward polar residues. Residues 827-838 (YPDDEEEDEEEE) are compositionally biased toward acidic residues. Ser-840 carries the post-translational modification Phosphoserine.

The protein belongs to the SMEK family. In terms of assembly, serine/threonine-protein phosphatase 4 (PP4) occurs in different assemblies of the catalytic and one or more regulatory subunits. Component of the PP4 complex PPP4C-PPP4R2-PPP4R3B. Moderately expressed in tissues and specific brain regions examined.

The protein resides in the cytoplasm. The protein localises to the cytoskeleton. It localises to the microtubule organizing center. Its subcellular location is the centrosome. It is found in the nucleus. In terms of biological role, regulatory subunit of serine/threonine-protein phosphatase 4 (PP4). May regulate the activity of PPP4C at centrosomal microtubule organizing centers. The chain is Serine/threonine-protein phosphatase 4 regulatory subunit 3B from Homo sapiens (Human).